The following is a 446-amino-acid chain: DDB1- and CUL4-associated factor 12 (446 aa).

Residues 1–12 (MTRRAVSRKRRA) are compositionally biased toward basic residues. Residues 1–33 (MTRRAVSRKRRAAPGTGPGEQSDWDHSAHKRKR) form a disordered region. 4 WD repeats span residues 132–173 (SHQS…PVCV), 177–215 (GHND…LSKS), 245–284 (PVNC…AKLL), and 333–370 (EQGS…FLED).

Belongs to the WD repeat DCAF12 family. As to quaternary structure, component of the DCX(DCAF12) E3 ubiquitin ligase complex, at least composed of cul4 (cul4a or cul4b), ddb1, dcaf12 and rbx1.

The protein resides in the cytoplasm. The protein localises to the cytoskeleton. It is found in the microtubule organizing center. Its subcellular location is the centrosome. It localises to the nucleus. The protein operates within protein modification; protein ubiquitination. Functionally, substrate-recognition component of a DCX (DDB1-CUL4-X-box) E3 ubiquitin-protein ligase complex of the DesCEND (destruction via C-end degrons) pathway, which recognizes a C-degron located at the extreme C terminus of target proteins, leading to their ubiquitination and degradation. The C-degron recognized by the DesCEND pathway is usually a motif of less than ten residues and can be present in full-length proteins, truncated proteins or proteolytically cleaved forms. The DCX(DCAF12) complex specifically recognizes proteins with a diglutamate (Glu-Glu) at the C-terminus leading to their ubiquitination and degradation. Also directly recognizes the C-terminal glutamate-leucine (Glu-Leu) degron as an alternative degron in proteins leading to their ubiquitination and degradation. This chain is DDB1- and CUL4-associated factor 12, found in Xenopus tropicalis (Western clawed frog).